The primary structure comprises 220 residues: Ribosomal RNA small subunit methyltransferase J (220 aa).

S-adenosyl-L-methionine-binding positions include 55 to 56, 71 to 72, and Asp123; these read RD and ER.

The protein belongs to the methyltransferase superfamily. RsmJ family.

It localises to the cytoplasm. The catalysed reaction is guanosine(1516) in 16S rRNA + S-adenosyl-L-methionine = N(2)-methylguanosine(1516) in 16S rRNA + S-adenosyl-L-homocysteine + H(+). Functionally, specifically methylates the guanosine in position 1516 of 16S rRNA. The sequence is that of Ribosomal RNA small subunit methyltransferase J from Rhodopseudomonas palustris (strain BisB5).